The sequence spans 250 residues: MAEQASSFTDRLAARFAGAQIAVALPRGEVTLEVAAADWHATCLALRDELGFEQLSDLCGVDYLGYGSDEWDTADVSSQGFSRGVEGKAVGRFAWGEFPSQESSAGAQPQQLPKQRFAVVAQLISYQHNQRLRVRCYAPDEQVPVVASLTDIWPGVNWFEREAFDLFGIVFDGHPDLRRILTDYGFVGHPFRKDFPLIGNVEVRYDEERKRVVYEPVTSVEPRVGVPRVIRDDARYETAAGEVGKSETAK.

Belongs to the complex I 30 kDa subunit family. In terms of assembly, NDH-1 is composed of 14 different subunits. Subunits NuoB, C, D, E, F, and G constitute the peripheral sector of the complex.

Its subcellular location is the cell inner membrane. The catalysed reaction is a quinone + NADH + 5 H(+)(in) = a quinol + NAD(+) + 4 H(+)(out). Its function is as follows. NDH-1 shuttles electrons from NADH, via FMN and iron-sulfur (Fe-S) centers, to quinones in the respiratory chain. The immediate electron acceptor for the enzyme in this species is believed to be ubiquinone. Couples the redox reaction to proton translocation (for every two electrons transferred, four hydrogen ions are translocated across the cytoplasmic membrane), and thus conserves the redox energy in a proton gradient. This chain is NADH-quinone oxidoreductase subunit C, found in Xanthomonas euvesicatoria pv. vesicatoria (strain 85-10) (Xanthomonas campestris pv. vesicatoria).